The primary structure comprises 401 residues: MRQAWRWFGPEAGVPLDAVRQAGATDIVSALHEVPIGQEWTSAQIVERKNLIESTPTGRHPLTWSVVESIPVSDDIKRSGKAARHDIGAWIASMEALARNDIKVICYNFMPVVDWCRTDLDYITSTGATAMRFDQDRFAAFDLHILRRKGAEKDYSEEDRIAARAIFEAMDETEIEQLIVNIASALPGSTTEPLTIPAFRKKLETYASIDAAHLRRNLVEFLEAVTPVADSLGVKLTLHPDDPPRSLFGLPRIASTEADYAAIFAAVPAQSNGMCFCTGSLGVRADNDLPAIARRFASRIHFSHLRATTREGDGRTFHEAAHLEGDVDMVGILRILLEEDRKRDAGQTIIFRSDHGHRMMDDLEKKVTPGYPVIGRMRGLAELRGIITALDACALEYDPNV.

The protein belongs to the mannonate dehydratase family. Fe(2+) serves as cofactor. It depends on Mn(2+) as a cofactor.

It catalyses the reaction D-mannonate = 2-dehydro-3-deoxy-D-gluconate + H2O. It participates in carbohydrate metabolism; pentose and glucuronate interconversion. Its function is as follows. Catalyzes the dehydration of D-mannonate. The protein is Mannonate dehydratase of Brucella melitensis biotype 2 (strain ATCC 23457).